We begin with the raw amino-acid sequence, 357 residues long: Arginine kinase Cal b 2.0101 (357 aa).

The 83-residue stretch at 9-91 (KLEEGFKKLE…FDPIIEDYHK (83 aa)) folds into the Phosphagen kinase N-terminal domain. 64–68 (GVGVY) contacts L-arginine. One can recognise a Phosphagen kinase C-terminal domain in the interval 119-356 (FVISTRVRCG…LELIKIEKEM (238 aa)). ATP-binding positions include 122 to 126 (STRVR) and His-185. Residues Cys-201 and Cys-271 are joined by a disulfide bond. L-arginine is bound at residue Glu-225. ATP is bound at residue Arg-229. Cys-271 is an L-arginine binding site. Residues 280–284 (RASVH) and 309–314 (RGTRGE) contribute to the ATP site. Glu-314 is a binding site for L-arginine.

Belongs to the ATP:guanido phosphotransferase family. Expressed in chela muscle (at protein level). Expressed in muscle.

It catalyses the reaction L-arginine + ATP = N(omega)-phospho-L-arginine + ADP + H(+). Functionally, catalyzes the reversible transfer of high energy ATP gamma-phosphate group to L-arginine. The polypeptide is Arginine kinase Cal b 2.0101 (Callinectes bellicosus (Warrior swimming crab)).